The following is a 172-amino-acid chain: Cystatin-like cysteine protease inhibitor EPIC4 (172 aa).

Residues 1 to 17 form the signal peptide; it reads MRASLSILVAFPALAAA. The Secondary area of contact signature appears at 71-75; that stretch reads QVVAG. Positions 129 to 172 are disordered; the sequence is EAATASSSSTPAPTPASTSTSASSSEETMLQSSVQQRAMFSDFV. Over residues 130–156 the composition is skewed to low complexity; sequence AATASSSSTPAPTPASTSTSASSSEET. Residues 157–166 are compositionally biased toward polar residues; the sequence is MLQSSVQQRA.

The protein belongs to the cystatin family.

The protein resides in the secreted. Secreted effector that interacts with and inhibits host apoplastic pathogenesis-related papain-like cysteine proteases. Inhibition of host proteases by a pathogen extracellular protease inhibitor forms a specific type of defense-counterdefense mechanism between plants and microbial pathogens. In Phytophthora infestans (Potato late blight agent), this protein is Cystatin-like cysteine protease inhibitor EPIC4.